The following is a 505-amino-acid chain: Monocarboxylate transporter 6 (505 aa).

Residues 1-17 (MPQALERADGSWAWVVL) lie on the Cytoplasmic side of the membrane. The helical transmembrane segment at 18 to 38 (LATMVTQGLTLGFPTCIGIFF) threads the bilayer. Residues 39–53 (TELQWEFQASNSETS) are Extracellular-facing. Residues 54–74 (WFPSILTAVLHMAGPLCSILV) traverse the membrane as a helical segment. The Cytoplasmic portion of the chain corresponds to 75–80 (GRFGCR). A helical transmembrane segment spans residues 81-101 (VTVMLGGVLASLGMVASSFSH). Over 102 to 110 (NLSQLYFTA) the chain is Extracellular. The helical transmembrane segment at 111–131 (GFITGLGMCFSFQSSITVLGF) threads the bilayer. The Cytoplasmic portion of the chain corresponds to 132–137 (YFVRRR). A helical transmembrane segment spans residues 138-158 (VLANALASMGVSLGITLWPLL). Residues 159–171 (SRYLLENLGWRGT) are Extracellular-facing. A helical membrane pass occupies residues 172–192 (FLVFGGIFLHCCICGAIIRPV). Over 193–239 (ATSVAPETKECPPPPPETPALGCLAACGRTIQRHLAFDILRHNTGYC) the chain is Cytoplasmic. A helical transmembrane segment spans residues 240–260 (VYILGVMWSVLGFPLPQVFLV). The Extracellular segment spans residues 261–274 (PYAMWHSVDEQQAA). The chain crosses the membrane as a helical span at residues 275–295 (LLISIIGFSNIFLRPLAGLMA). Residues 296–305 (GRPAFASHRK) lie on the Cytoplasmic side of the membrane. The chain crosses the membrane as a helical span at residues 306–326 (YLFSLALLLNGLTNLVCAASG). Residues 327–329 (DFW) are Extracellular-facing. Residues 330–350 (VLVGYCLAYSVSMSGIGALIF) form a helical membrane-spanning segment. The Cytoplasmic segment spans residues 351 to 367 (QVLMDIVPMDQFPRALG). Residues 368–388 (LFTVLDGLAFLISPPLAGLLL) form a helical membrane-spanning segment. The Extracellular portion of the chain corresponds to 389–396 (DATNNFSY). Residues 397–417 (VFYMSSFFLISAALFMGGSFY) form a helical membrane-spanning segment. Residues 418-505 (ALQKKEQGKQ…QTALGWNSPT (88 aa)) are Cytoplasmic-facing. The disordered stretch occupies residues 443 to 464 (KDGPGKQRSPEIMCQSSRQPRP).

The protein belongs to the major facilitator superfamily. Monocarboxylate porter (TC 2.A.1.13) family. As to expression, highly expressed in kidney.

Its subcellular location is the cell membrane. Proton-linked monocarboxylate transporter. Catalyzes the rapid transport across the plasma membrane of many monocarboxylates such as lactate, pyruvate, branched-chain oxo acids derived from leucine, valine and isoleucine, and the ketone bodies acetoacetate, beta-hydroxybutyrate and acetate. In Homo sapiens (Human), this protein is Monocarboxylate transporter 6 (SLC16A5).